A 118-amino-acid polypeptide reads, in one-letter code: Small ribosomal subunit protein uS13 (118 aa).

The disordered stretch occupies residues 92–118; sequence RRNLPVRGQNTKNNARTRKGPTRPLKR. Residues 106 to 118 are compositionally biased toward basic residues; that stretch reads ARTRKGPTRPLKR.

This sequence belongs to the universal ribosomal protein uS13 family. Part of the 30S ribosomal subunit. Forms a loose heterodimer with protein S19. Forms two bridges to the 50S subunit in the 70S ribosome.

Its function is as follows. Located at the top of the head of the 30S subunit, it contacts several helices of the 16S rRNA. In the 70S ribosome it contacts the 23S rRNA (bridge B1a) and protein L5 of the 50S subunit (bridge B1b), connecting the 2 subunits; these bridges are implicated in subunit movement. Contacts the tRNAs in the A and P-sites. The protein is Small ribosomal subunit protein uS13 of Psychrobacter arcticus (strain DSM 17307 / VKM B-2377 / 273-4).